Reading from the N-terminus, the 260-residue chain is LIM and SH3 domain protein 1 (260 aa).

Residue Met1 is modified to N-acetylmethionine. Positions 5-56 (CARCCKIVYPTEKVNCLDKFWHKACFHCETCKMTLNMKNYKGYEKKPYCNAH) constitute an LIM zinc-binding domain. N6-acetyllysine is present on Lys42. Nebulin repeat units lie at residues 61–95 (SFTM…KNKG) and 97–131 (GFSV…KSRM). Thr68 is subject to Phosphothreonine. Lys75 carries the N6-methyllysine modification. Ser99 is modified (phosphoserine). The residue at position 104 (Thr104) is a Phosphothreonine. The residue at position 112 (Lys112) is an N6-succinyllysine. Phosphoserine is present on residues Ser118 and Ser134. Residues 123–204 (HEEFEKSRMG…QRSAPGGGGK (82 aa)) form a disordered region. The span at 140–155 (ECERRDPQESSYRRPQ) shows a compositional bias: basic and acidic residues. Over residues 171 to 180 (QQPQQQPAAQ) the composition is skewed to low complexity. The region spanning 201–260 (GGGKRYRAVYDYSAADEDEVSFQDGDTIVNVQQIDDGWMYGTVERTGDTGMLPANYVEAI) is the SH3 domain.

As to quaternary structure, interacts with F-actin. Interacts with ANKRD54. Interacts with KBTBD10. In terms of processing, phosphorylated.

The protein localises to the cytoplasm. The protein resides in the cell cortex. Its subcellular location is the cytoskeleton. Plays an important role in the regulation of dynamic actin-based, cytoskeletal activities. Agonist-dependent changes in LASP1 phosphorylation may also serve to regulate actin-associated ion transport activities, not only in the parietal cell but also in certain other F-actin-rich secretory epithelial cell types. The sequence is that of LIM and SH3 domain protein 1 (LASP1) from Bos taurus (Bovine).